The sequence spans 344 residues: Protein RecA (344 aa).

64–71 (GPESSGKT) is an ATP binding site.

The protein belongs to the RecA family.

The protein resides in the cytoplasm. Functionally, can catalyze the hydrolysis of ATP in the presence of single-stranded DNA, the ATP-dependent uptake of single-stranded DNA by duplex DNA, and the ATP-dependent hybridization of homologous single-stranded DNAs. It interacts with LexA causing its activation and leading to its autocatalytic cleavage. This Paramagnetospirillum magnetotacticum (Aquaspirillum magnetotacticum) protein is Protein RecA.